The chain runs to 466 residues: Phytase A (466 aa).

Positions 1-19 (MGVFVVLLSIATLFGSTSG) are cleaved as a signal peptide. Asn-27 is a glycosylation site (N-linked (GlcNAc...) asparagine). An intrachain disulfide couples Cys-31 to Cys-40. Tyr-51, Arg-81, His-82, Arg-85, and Thr-88 together coordinate 1D-myo-inositol hexakisphosphate. Intrachain disulfides connect Cys-71–Cys-414, Cys-215–Cys-465, Cys-264–Cys-282, and Cys-436–Cys-444. His-82 acts as the Nucleophile in catalysis. Residues Asn-105 and Asn-120 are each glycosylated (N-linked (GlcNAc...) asparagine). Residue Arg-165 coordinates 1D-myo-inositol hexakisphosphate. 2 N-linked (GlcNAc...) asparagine glycosylation sites follow: Asn-207 and Asn-230. Lys-301 contributes to the 1D-myo-inositol hexakisphosphate binding site. Residues Asn-339 and Asn-352 are each glycosylated (N-linked (GlcNAc...) asparagine). 2 residues coordinate 1D-myo-inositol hexakisphosphate: His-361 and Asp-362. The N-linked (GlcNAc...) asparagine glycan is linked to Asn-376.

It belongs to the histidine acid phosphatase family. As to quaternary structure, monomer.

The protein localises to the secreted. It catalyses the reaction 1D-myo-inositol hexakisphosphate + H2O = 1D-myo-inositol 1,2,4,5,6-pentakisphosphate + phosphate. The catalysed reaction is 1D-myo-inositol 1,2,4,5,6-pentakisphosphate + H2O = 1D-myo-inositol 1,2,5,6-tetrakisphosphate + phosphate. The enzyme catalyses 1D-myo-inositol 1,2,5,6-tetrakisphosphate + H2O = 1D-myo-inositol 1,2,6-trisphosphate + phosphate. It carries out the reaction 1D-myo-inositol 1,2,6-trisphosphate + H2O = 1D-myo-inositol 1,2-bisphosphate + phosphate. It catalyses the reaction 1D-myo-inositol 1,2-bisphosphate + H2O = 1D-myo-inositol 2-phosphate + phosphate. Catalyzes the phosphate monoester hydrolysis of phytic acid (myo-inositol hexakisphosphate), which results in the stepwise formation of myo-inositol pentakis-, tetrakis-, tris-, bis-, and monophosphates, as well as the liberation of inorganic phosphate. Myo-inositol 2-monophosphate is the end product. Has a broad substrate specificity and is also able to dephosphorylate other classic acid phosphatase substrates such as p-nitrophenyl phosphate, phenyl phosphate, fructose 1,6-bisphosphate, glucose 6-phosphate, 3-phosphoglycerate, as well as ADP and ATP. The protein is Phytase A of Aspergillus terreus.